The primary structure comprises 359 residues: tRNA N6-adenosine threonylcarbamoyltransferase (359 aa).

Residues histidine 115 and histidine 119 each coordinate Fe cation. Substrate is bound by residues 137 to 141, aspartate 170, glycine 183, and asparagine 283; that span reads LVSGG. Fe cation is bound at residue aspartate 311. Residues 328 to 359 are disordered; sequence APDSLDLAPRSRWPLDEKSAPLIGTGRRGAKA.

It belongs to the KAE1 / TsaD family. It depends on Fe(2+) as a cofactor.

The protein resides in the cytoplasm. It catalyses the reaction L-threonylcarbamoyladenylate + adenosine(37) in tRNA = N(6)-L-threonylcarbamoyladenosine(37) in tRNA + AMP + H(+). In terms of biological role, required for the formation of a threonylcarbamoyl group on adenosine at position 37 (t(6)A37) in tRNAs that read codons beginning with adenine. Is involved in the transfer of the threonylcarbamoyl moiety of threonylcarbamoyl-AMP (TC-AMP) to the N6 group of A37, together with TsaE and TsaB. TsaD likely plays a direct catalytic role in this reaction. This chain is tRNA N6-adenosine threonylcarbamoyltransferase, found in Brucella anthropi (strain ATCC 49188 / DSM 6882 / CCUG 24695 / JCM 21032 / LMG 3331 / NBRC 15819 / NCTC 12168 / Alc 37) (Ochrobactrum anthropi).